An 87-amino-acid chain; its full sequence is Glutaredoxin (87 aa).

The Glutaredoxin domain maps to M1–D87. The cysteines at positions 11 and 14 are disulfide-linked.

Belongs to the glutaredoxin family. In terms of assembly, monomer.

The protein resides in the cytoplasm. In terms of biological role, has a glutathione-disulfide oxidoreductase activity in the presence of NADPH and glutathione reductase. Reduces low molecular weight disulfides and proteins. The protein is Glutaredoxin (grx) of Vibrio cholerae serotype O1 (strain ATCC 39315 / El Tor Inaba N16961).